An 89-amino-acid polypeptide reads, in one-letter code: Small ribosomal subunit protein uS15 (89 aa).

This sequence belongs to the universal ribosomal protein uS15 family. Part of the 30S ribosomal subunit. Forms a bridge to the 50S subunit in the 70S ribosome, contacting the 23S rRNA.

Its function is as follows. One of the primary rRNA binding proteins, it binds directly to 16S rRNA where it helps nucleate assembly of the platform of the 30S subunit by binding and bridging several RNA helices of the 16S rRNA. Functionally, forms an intersubunit bridge (bridge B4) with the 23S rRNA of the 50S subunit in the ribosome. The protein is Small ribosomal subunit protein uS15 of Ureaplasma parvum serovar 3 (strain ATCC 27815 / 27 / NCTC 11736).